The following is a 162-amino-acid chain: MNKDEIRIGIADLNVALPPKKLITVGLGSCIGIALYDSIKKIGGLAHIMLPDSTQFSNVSNPMKFADLAIPMLLEKMEKQGAVKRHLKAKIAGGASMFNFSDKSMIMDIGNRNSKSVKKVLGEYGIPIISEDTGGNKGRTMIFSTEDGMVEIRTVGMGIRAI.

Belongs to the CheD family.

It carries out the reaction L-glutaminyl-[protein] + H2O = L-glutamyl-[protein] + NH4(+). Probably deamidates glutamine residues to glutamate on methyl-accepting chemotaxis receptors (MCPs), playing an important role in chemotaxis. This chain is Probable chemoreceptor glutamine deamidase CheD, found in Clostridium novyi (strain NT).